Reading from the N-terminus, the 262-residue chain is Acetylglutamate kinase (262 aa).

Substrate-binding positions include 46 to 47 (GG), Arg68, and Asn160.

It belongs to the acetylglutamate kinase family. ArgB subfamily.

The protein localises to the cytoplasm. The enzyme catalyses N-acetyl-L-glutamate + ATP = N-acetyl-L-glutamyl 5-phosphate + ADP. Its pathway is amino-acid biosynthesis; L-arginine biosynthesis; N(2)-acetyl-L-ornithine from L-glutamate: step 2/4. Functionally, catalyzes the ATP-dependent phosphorylation of N-acetyl-L-glutamate. The polypeptide is Acetylglutamate kinase (Shewanella amazonensis (strain ATCC BAA-1098 / SB2B)).